Here is a 99-residue protein sequence, read N- to C-terminus: HssA/B-like protein 41 (99 aa).

Residues 1-29 (MTLFSSISSISNPMTSSKSSISSFGSGTS) are disordered.

This sequence belongs to the hssA/B family.

This is HssA/B-like protein 41 (hssl41) from Dictyostelium discoideum (Social amoeba).